Reading from the N-terminus, the 102-residue chain is ATP-dependent Clp protease adapter protein ClpS (102 aa).

This sequence belongs to the ClpS family. As to quaternary structure, binds to the N-terminal domain of the chaperone ClpA.

Its function is as follows. Involved in the modulation of the specificity of the ClpAP-mediated ATP-dependent protein degradation. In Desulfotalea psychrophila (strain LSv54 / DSM 12343), this protein is ATP-dependent Clp protease adapter protein ClpS.